The chain runs to 177 residues: Ubiquitin-conjugating enzyme E2 C (177 aa).

The interval 1–31 is disordered; the sequence is MSGQNIDPAANQVRQKERPRDMTTSKERHSV. The span at 14 to 30 shows a compositional bias: basic and acidic residues; it reads RQKERPRDMTTSKERHS. Residues 30–175 enclose the UBC core domain; the sequence is SVSKRLQQEL…LHEKYKTAQS (146 aa). Cys-114 functions as the Glycyl thioester intermediate in the catalytic mechanism.

This sequence belongs to the ubiquitin-conjugating enzyme family. As to quaternary structure, component of the APC/C complex. Post-translationally, autoubiquitinated by the APC/C complex, leading to its degradation by the proteasome.

The enzyme catalyses S-ubiquitinyl-[E1 ubiquitin-activating enzyme]-L-cysteine + [E2 ubiquitin-conjugating enzyme]-L-cysteine = [E1 ubiquitin-activating enzyme]-L-cysteine + S-ubiquitinyl-[E2 ubiquitin-conjugating enzyme]-L-cysteine.. It catalyses the reaction S-ubiquitinyl-[E1 ubiquitin-activating enzyme]-L-cysteine + [acceptor protein]-L-lysine = [E1 ubiquitin-activating enzyme]-L-cysteine + N(6)-monoubiquitinyl-[acceptor protein]-L-lysine.. It functions in the pathway protein modification; protein ubiquitination. In terms of biological role, catalyzes the covalent attachment of ubiquitin to other proteins. Acts as an essential factor of the anaphase promoting complex/cyclosome (APC/C), a cell cycle-regulated ubiquitin ligase that is essential for the transition from metaphase to anaphase in mitosis. Involved in both degradation of proteins responsible for maintaining sister chromatid cohesion at the onset of anaphase and of mitotic cyclins A and B at the exit of mitosis. Acts by initiating polyubiquitin chains on APC/C substrates, leading to the degradation of APC/C substrates by the proteasome and promoting mitotic exit. This Spisula solidissima (Atlantic surf-clam) protein is Ubiquitin-conjugating enzyme E2 C (UBE2C).